Reading from the N-terminus, the 473-residue chain is Dol-P-Glc:Glc(2)Man(9)GlcNAc(2)-PP-Dol alpha-1,2-glucosyltransferase (473 aa).

Residues 1-6 (MAQLEG) are Cytoplasmic-facing. A helical transmembrane segment spans residues 7–27 (YYFSAALSCTFLVSCLLFSAF). At 28–64 (SRALREPYMDEIFHLPQAQRYCEGHFSLSQWDPMITT) the chain is on the extracellular side. Residues 65–85 (LPGLYLVSIGVIKPAIWIFGW) traverse the membrane as a helical segment. The Cytoplasmic portion of the chain corresponds to 86 to 97 (SEHVVCSIGMLR). The helical transmembrane segment at 98–118 (FVNLLFSVGNFYLLYLLFCKV) threads the bilayer. The Extracellular segment spans residues 119 to 130 (QPRNKAASSIQR). The next 2 helical transmembrane spans lie at 131–151 (VLSTLTLAVFPTLYFFNFLYY) and 152–172 (TEAGSMFFTLFAYLMCLYGNH). Topologically, residues 173 to 175 (KTS) are extracellular. The helical transmembrane segment at 176–196 (AFLGFCGFMFRQTNIIWAVFC) threads the bilayer. At 197-249 (AGNVIAQKLTEAWKTELQKKEDRLPPIKGPFAEFRKILQFLLAYSMSFKNLSM) the chain is on the cytoplasmic side. Residues 250 to 270 (LLLLTWPYILLGFLFCAFVVV) form a helical membrane-spanning segment. Over 271 to 283 (NGGIVIGDRSSHE) the chain is Extracellular. Residues 284-304 (ACLHFPQLFYFFSFTLFFSFP) traverse the membrane as a helical segment. Residues 305–323 (HLLSPSKIKTFLSLVWKRR) lie on the Cytoplasmic side of the membrane. The helical transmembrane segment at 324 to 344 (ILFFVVTLVSVFLVWKFTYAH) threads the bilayer. Residues 345-367 (KYLLADNRHYTFYVWKRVFQRYE) are Extracellular-facing. The helical transmembrane segment at 368 to 388 (TVKYLLVPAYIFAGWSIADSL) threads the bilayer. At 389–392 (KSKS) the chain is on the cytoplasmic side. Residues 393–413 (IFWNLMFFICLFTVIVPQKLL) traverse the membrane as a helical segment. Topologically, residues 414 to 436 (EFRYFILPYVIYRLNIPLPPTSR) are extracellular. Residues 437-457 (LICELSCYAVVNFITFFIFLN) form a helical membrane-spanning segment. Over 458–473 (KTFQWPNSQDIQRFMW) the chain is Cytoplasmic.

It belongs to the ALG10 glucosyltransferase family.

The protein resides in the endoplasmic reticulum membrane. The catalysed reaction is an alpha-D-Glc-(1-&gt;3)-alpha-D-Glc-(1-&gt;3)-alpha-D-Man-(1-&gt;2)-alpha-D-Man-(1-&gt;2)-alpha-D-Man-(1-&gt;3)-[alpha-D-Man-(1-&gt;2)-alpha-D-Man-(1-&gt;3)-[alpha-D-Man-(1-&gt;2)-alpha-D-Man-(1-&gt;6)]-alpha-D-Man-(1-&gt;6)]-beta-D-Man-(1-&gt;4)-beta-D-GlcNAc-(1-&gt;4)-alpha-D-GlcNAc-diphospho-di-trans,poly-cis-dolichol + a di-trans,poly-cis-dolichyl beta-D-glucosyl phosphate = a alpha-D-Glc-(1-&gt;2)-alpha-D-Glc-(1-&gt;3)-alpha-D-Glc-(1-&gt;3)-alpha-D-Man-(1-&gt;2)-alpha-D-Man-(1-&gt;2)-alpha-D-Man-(1-&gt;3)-[alpha-D-Man-(1-&gt;2)-alpha-D-Man-(1-&gt;3)-[alpha-D-Man-(1-&gt;2)-alpha-D-Man-(1-&gt;6)]-alpha-D-Man-(1-&gt;6)]-beta-D-Man-(1-&gt;4)-beta-D-GlcNAc-(1-&gt;4)-alpha-D-GlcNAc-diphospho-di-trans,poly-cis-dolichol + a di-trans,poly-cis-dolichyl phosphate + H(+). It functions in the pathway protein modification; protein glycosylation. Its function is as follows. Dol-P-Glc:Glc(2)Man(9)GlcNAc(2)-PP-Dol alpha-1,2-glucosyltransferase that operates in the biosynthetic pathway of dolichol-linked oligosaccharides, the glycan precursors employed in protein asparagine (N)-glycosylation. The assembly of dolichol-linked oligosaccharides begins on the cytosolic side of the endoplasmic reticulum membrane and finishes in its lumen. The sequential addition of sugars to dolichol pyrophosphate produces dolichol-linked oligosaccharides containing fourteen sugars, including two GlcNAcs, nine mannoses and three glucoses. Once assembled, the oligosaccharide is transferred from the lipid to nascent proteins by oligosaccharyltransferases. In the lumen of the endoplasmic reticulum, adds the third and last glucose residue from dolichyl phosphate glucose (Dol-P-Glc) onto the lipid-linked oligosaccharide intermediate Glc(2)Man(9)GlcNAc(2)-PP-Dol to produce Glc(3)Man(9)GlcNAc(2)-PP-Dol. This is Dol-P-Glc:Glc(2)Man(9)GlcNAc(2)-PP-Dol alpha-1,2-glucosyltransferase from Homo sapiens (Human).